A 387-amino-acid chain; its full sequence is MSTFFSDTAWICLAVPTVLCGTVFCKYKKSSGQLWSWMVCLAGLCAVCLLILSPFWGLILFSVSCFLMYTYLSGQELLPVDQKAVLVTGGDCGLGHALCKYLDELGFTVFAGVLNENGPGAEELRRTCSPRLSVLQMDITKPVQIKDAYSKVAAMLQDRGLWAVINNAGVLGFPTDGELLLMTDYKQCMAVNFFGTVEVTKTFLPLLRKSKGRLVNVSSMGGGAPMERLASYGSSKAAVTMFSSVMRLELSKWGIKVASIQPGGFLTNIAGTSDKWEKLEKDILDHLPAEVQEDYGQDYILAQRNFLLLINSLASKDFSPVLRDIQHAILAKSPFAYYTPGKGAYLWICLAHYLPIGIYDYFAKRHFGQDKPMPRALRMPNYKKKAT.

Residues 4–24 (FFSDTAWICLAVPTVLCGTVF) form a helical; Signal-anchor for type II membrane protein membrane-spanning segment. 82 to 111 (QKAVLVTGGDCGLGHALCKYLDELGFTVFA) lines the NAD(+) pocket. S219 lines the substrate pocket. Residue Y232 is part of the active site.

This sequence belongs to the short-chain dehydrogenases/reductases (SDR) family. In terms of assembly, homodimer. In terms of tissue distribution, expressed in placenta.

It localises to the endoplasmic reticulum membrane. The catalysed reaction is 17beta-estradiol + NAD(+) = estrone + NADH + H(+). It catalyses the reaction testosterone + NAD(+) = androst-4-ene-3,17-dione + NADH + H(+). It carries out the reaction 17beta-hydroxy-5alpha-androstan-3-one + NAD(+) = 5alpha-androstan-3,17-dione + NADH + H(+). The enzyme catalyses (20S)-hydroxypregn-4-en-3-one + NAD(+) = progesterone + NADH + H(+). Its function is as follows. Catalyzes the NAD-dependent oxidation of the highly active 17beta-hydroxysteroids, such as estradiol (E2), testosterone (T), and dihydrotestosterone (DHT), to their less active forms and thus regulates the biological potency of these steroids. Oxidizes estradiol to estrone, testosterone to androstenedione, and dihydrotestosterone to 5alpha-androstan-3,17-dione. Also has 20-alpha-HSD activity. The chain is 17-beta-hydroxysteroid dehydrogenase type 2 from Homo sapiens (Human).